Consider the following 251-residue polypeptide: Hydroxyacylglutathione hydrolase (251 aa).

7 residues coordinate Zn(2+): His-53, His-55, Asp-57, His-58, His-110, Asp-127, and His-165.

Belongs to the metallo-beta-lactamase superfamily. Glyoxalase II family. Monomer. Requires Zn(2+) as cofactor.

The enzyme catalyses an S-(2-hydroxyacyl)glutathione + H2O = a 2-hydroxy carboxylate + glutathione + H(+). It functions in the pathway secondary metabolite metabolism; methylglyoxal degradation; (R)-lactate from methylglyoxal: step 2/2. Thiolesterase that catalyzes the hydrolysis of S-D-lactoyl-glutathione to form glutathione and D-lactic acid. The sequence is that of Hydroxyacylglutathione hydrolase from Enterobacter sp. (strain 638).